Reading from the N-terminus, the 121-residue chain is Large ribosomal subunit protein eL8 (121 aa).

The protein belongs to the eukaryotic ribosomal protein eL8 family. As to quaternary structure, part of the 50S ribosomal subunit. Probably part of the RNase P complex.

It localises to the cytoplasm. In terms of biological role, multifunctional RNA-binding protein that recognizes the K-turn motif in ribosomal RNA, the RNA component of RNase P, box H/ACA, box C/D and box C'/D' sRNAs. This chain is Large ribosomal subunit protein eL8, found in Thermoplasma acidophilum (strain ATCC 25905 / DSM 1728 / JCM 9062 / NBRC 15155 / AMRC-C165).